Consider the following 2319-residue polypeptide: Neurogenic locus notch homolog protein 3 (2319 aa).

A compositionally biased stretch (basic residues) spans 1–14 (MGPGARGRRRRRRL). Residues 1–20 (MGPGARGRRRRRRLMALPPP) form a disordered region. Residues 1 to 40 (MGPGARGRRRRRRLMALPPPPPPMRALPLLLLLLAGLGAA) form the signal peptide. 3 consecutive EGF-like domains span residues 41 to 79 (APPC…ERCQ), 80 to 120 (LEDP…PDCS), and 121 to 158 (LPDP…RNCR). Residues 41–1645 (APPCLDGSPC…LEPPEQSVPL (1605 aa)) lie on the Extracellular side of the membrane. Cystine bridges form between cysteine 44–cysteine 56, cysteine 50–cysteine 67, cysteine 69–cysteine 78, cysteine 84–cysteine 95, cysteine 89–cysteine 108, cysteine 110–cysteine 119, cysteine 125–cysteine 136, cysteine 130–cysteine 146, cysteine 148–cysteine 157, cysteine 164–cysteine 176, cysteine 170–cysteine 185, cysteine 187–cysteine 196, cysteine 203–cysteine 214, cysteine 208–cysteine 224, cysteine 226–cysteine 235, cysteine 242–cysteine 253, cysteine 247–cysteine 262, cysteine 264–cysteine 273, cysteine 280–cysteine 293, cysteine 287–cysteine 302, cysteine 304–cysteine 313, cysteine 320–cysteine 331, cysteine 325–cysteine 340, cysteine 342–cysteine 351, cysteine 357–cysteine 368, cysteine 362–cysteine 379, cysteine 381–cysteine 390, cysteine 397–cysteine 410, cysteine 404–cysteine 419, cysteine 421–cysteine 430, cysteine 437–cysteine 448, cysteine 442–cysteine 457, cysteine 459–cysteine 468, cysteine 475–cysteine 486, cysteine 480–cysteine 495, cysteine 497–cysteine 506, cysteine 513–cysteine 524, cysteine 518–cysteine 533, cysteine 535–cysteine 544, cysteine 551–cysteine 561, cysteine 556–cysteine 570, cysteine 572–cysteine 581, cysteine 588–cysteine 599, cysteine 593–cysteine 608, cysteine 610–cysteine 619, cysteine 626–cysteine 636, cysteine 631–cysteine 645, cysteine 647–cysteine 656, cysteine 663–cysteine 674, cysteine 668–cysteine 683, cysteine 685–cysteine 694, cysteine 701–cysteine 711, cysteine 706–cysteine 720, cysteine 722–cysteine 731, cysteine 740–cysteine 751, cysteine 745–cysteine 760, cysteine 762–cysteine 771, cysteine 777–cysteine 788, cysteine 782–cysteine 798, cysteine 800–cysteine 809, cysteine 816–cysteine 828, cysteine 822–cysteine 837, cysteine 839–cysteine 848, cysteine 855–cysteine 866, cysteine 860–cysteine 875, cysteine 877–cysteine 886, cysteine 893–cysteine 903, cysteine 898–cysteine 912, cysteine 914–cysteine 923, cysteine 930–cysteine 941, cysteine 935–cysteine 950, cysteine 952–cysteine 961, cysteine 968–cysteine 979, cysteine 973–cysteine 988, cysteine 990–cysteine 999, cysteine 1006–cysteine 1017, cysteine 1011–cysteine 1024, cysteine 1026–cysteine 1035, cysteine 1042–cysteine 1063, cysteine 1057–cysteine 1072, cysteine 1074–cysteine 1083, cysteine 1090–cysteine 1101, cysteine 1095–cysteine 1110, cysteine 1112–cysteine 1121, cysteine 1128–cysteine 1139, cysteine 1133–cysteine 1148, cysteine 1150–cysteine 1159, cysteine 1166–cysteine 1184, cysteine 1178–cysteine 1193, cysteine 1195–cysteine 1204, cysteine 1211–cysteine 1224, cysteine 1216–cysteine 1234, cysteine 1236–cysteine 1245, cysteine 1252–cysteine 1263, cysteine 1257–cysteine 1277, cysteine 1279–cysteine 1288, cysteine 1295–cysteine 1306, cysteine 1300–cysteine 1315, and cysteine 1317–cysteine 1326. An EGF-like 4; calcium-binding domain is found at 160–197 (DIDECRAGASCRHGGTCINTPGSFHCLCPLGYTGLLCE). Residues 199 to 236 (PIVPCAPSPCRNGGTCRQSSDVTYDCACLPGFEGQNCE) form the EGF-like 5 domain. One can recognise an EGF-like 6; calcium-binding domain in the interval 238-274 (NVDDCPGHRCLNGGTCVDGVNTYNCQCPPEWTGQFCT). The EGF-like 7 domain maps to 276–314 (DVDECQLQPNACHNGGTCFNLLGGHSCVCVNGWTGESCS). Residues 316–352 (NIDDCATAVCFHGATCHDRVASFYCACPMGKTGLLCH) form the EGF-like 8; calcium-binding domain. The EGF-like 9 domain maps to 353–391 (LDDACVSNPCHEDAICDTNPVSGRAICTCPPGFTGGACD). The EGF-like 10; calcium-binding domain occupies 393–431 (DVDECSIGANPCEHLGRCVNTQGSFLCQCGRGYTGPRCE). The EGF-like 11; calcium-binding domain maps to 433–469 (DVNECLSGPCRNQATCLDRIGQFTCICMAGFTGTFCE). Positions 471-507 (DIDECQSSPCVNGGVCKDRVNGFSCTCPSGFSGSTCQ) constitute an EGF-like 12; calcium-binding domain. The region spanning 509 to 545 (DVDECASTPCRNGAKCVDQPDGYECRCAEGFEGTLCE) is the EGF-like 13; calcium-binding domain. In terms of domain architecture, EGF-like 14; calcium-binding spans 547-582 (NVDDCSPDPCHHGRCVDGIASFSCACAPGYTGIRCE). The region spanning 584 to 620 (QVDECRSQPCRYGGKCLDLVDKYLCRCPPGTTGVNCE) is the EGF-like 15; calcium-binding domain. The 36-residue stretch at 622–657 (NIDDCASNPCTFGVCRDGINRYDCVCQPGFTGPLCN) folds into the EGF-like 16; calcium-binding domain. Positions 659 to 695 (EINECASSPCGEGGSCVDGENGFHCLCPPGSLPPLCL) constitute an EGF-like 17; calcium-binding domain. EGF-like domains lie at 697-732 (ANHP…PRCS), 736-772 (APDA…HQCE), and 773-810 (VLSP…PRCQ). Residues 812–849 (DVDECAGASPCGPHGTCTNLPGSFRCICHGGYTGPFCD) form the EGF-like 21; calcium-binding domain. Residues 851–887 (DIDDCDPNPCLNGGSCQDGVGSFSCSCLSGFAGPRCA) enclose the EGF-like 22; calcium-binding domain. The EGF-like 23; calcium-binding domain occupies 889–924 (DVDECLSSPCGPGTCTDHVASFTCTCPPGYGGFHCE). EGF-like domains are found at residues 926 to 962 (DLLD…THCQ), 964 to 1000 (KVDP…NQCQ), 1002 to 1036 (PVDW…PLCD), 1038 to 1084 (PSLP…SHCE), and 1086 to 1122 (EVDP…DSCE). The region spanning 1124–1160 (DVDECASQPCQNGGSCIDLVAHYLCSCPPGTLGVLCE) is the EGF-like 29; calcium-binding domain. The 44-residue stretch at 1162–1205 (NEDDCGPGPSLDSGLRCLHNGTCVDLVGGFRCNCPPGYTGLHCE) folds into the EGF-like 30; calcium-binding domain. The N-linked (GlcNAc...) asparagine glycan is linked to asparagine 1181. EGF-like domains are found at residues 1207–1246 (DINE…PRCQ), 1248–1289 (ALFP…LRCE), 1291–1327 (VARS…PSCR), and 1337–1375 (TNTS…PRCE). Residue asparagine 1338 is glycosylated (N-linked (GlcNAc...) asparagine). Cystine bridges form between cysteine 1341-cysteine 1352, cysteine 1346-cysteine 1363, cysteine 1365-cysteine 1374, cysteine 1389-cysteine 1412, cysteine 1394-cysteine 1407, cysteine 1403-cysteine 1419, cysteine 1430-cysteine 1453, cysteine 1435-cysteine 1448, cysteine 1444-cysteine 1460, cysteine 1469-cysteine 1495, cysteine 1477-cysteine 1490, and cysteine 1486-cysteine 1502. LNR repeat units lie at residues 1389 to 1429 (CPRA…PWRQ), 1430 to 1467 (CEAL…GRDR), and 1469 to 1507 (CNPV…SEVP). N-linked (GlcNAc...) asparagine glycosylation occurs at asparagine 1440. A helical membrane pass occupies residues 1646-1666 (LPLLVAGAVFLLVIFVLGVMV). Over 1667–2319 (ARRKREHSTL…EVTPKRQVMA (653 aa)) the chain is Cytoplasmic. 5 ANK repeats span residues 1840–1869 (TGET…DTNA), 1873–1903 (SGRT…DLDA), 1907–1936 (DGST…DVNA), 1940–1969 (LGKS…NKDM), and 1973–2002 (KEET…NREI). 2 disordered regions span residues 2026–2046 (LDQP…PLLC) and 2059–2129 (QSGT…EGPY). Residues 2029–2046 (PSGPRSPSGPHGLGPLLC) are compositionally biased toward low complexity. Omega-N-methylarginine is present on arginine 2175. The disordered stretch occupies residues 2197-2319 (LNPATPVSPH…EVTPKRQVMA (123 aa)). Residues 2263 to 2288 (SLSDWSDSTPSPATATSATAAGALPA) are compositionally biased toward low complexity. Residues 2297-2306 (SLPQSQTQLG) are compositionally biased toward polar residues.

This sequence belongs to the NOTCH family. In terms of assembly, heterodimer of a C-terminal fragment N(TM) and a N-terminal fragment N(EC) which are probably linked by disulfide bonds. Interacts with MAML1, MAML2 and MAML3 which act as transcriptional coactivators for NOTCH3. Interacts with PSMA1. Interacts with HIF1AN. Synthesized in the endoplasmic reticulum as an inactive form which is proteolytically cleaved by a furin-like convertase in the trans-Golgi network before it reaches the plasma membrane to yield an active, ligand-accessible form. Cleavage results in a C-terminal fragment N(TM) and a N-terminal fragment N(EC). Following ligand binding, it is cleaved by TNF-alpha converting enzyme (TACE) to yield a membrane-associated intermediate fragment called notch extracellular truncation (NEXT). This fragment is then cleaved by presenilin dependent gamma-secretase to release a notch-derived peptide containing the intracellular domain (NICD) from the membrane. In terms of processing, phosphorylated. Post-translationally, hydroxylated by HIF1AN. As to expression, expressed in postnatal central nervous system (CNS) germinal zones and, in early postnatal life, within numerous cells throughout the CNS. It is more highly localized to ventricular germinal zones.

Its subcellular location is the cell membrane. It localises to the nucleus. Functions as a receptor for membrane-bound ligands Jagged1, Jagged2 and Delta1 to regulate cell-fate determination. Upon ligand activation through the released notch intracellular domain (NICD) it forms a transcriptional activator complex with RBPJ/RBPSUH and activates genes of the enhancer of split locus. Affects the implementation of differentiation, proliferation and apoptotic programs. Acts instructively to control the cell fate determination of CNS multipotent progenitor cells, resulting in astroglial induction and neuron/oligodendrocyte suppression. The polypeptide is Neurogenic locus notch homolog protein 3 (Notch3) (Rattus norvegicus (Rat)).